The sequence spans 513 residues: Putative ATP-dependent RNA helicase QP509L (513 aa).

In terms of domain architecture, Helicase ATP-binding spans 110-262 (KKLLSPYGRF…KIIIHHLGQP (153 aa)). Residue 123-130 (LNTGLGKT) coordinates ATP. The short motif at 215–218 (DEAH) is the DEAH box element.

This sequence belongs to the DEAD box helicase family. DEAH subfamily.

The enzyme catalyses ATP + H2O = ADP + phosphate + H(+). This is Putative ATP-dependent RNA helicase QP509L from Ornithodoros (relapsing fever ticks).